Reading from the N-terminus, the 232-residue chain is Vesicle transport through interaction with t-SNAREs homolog 1B (232 aa).

A2 carries the post-translational modification N-acetylalanine. Interaction with CLINT1 regions lie at residues 2 to 23 and 69 to 73; these read ASSAASSEHFEKLHEIFRGLHE and APLSF. Residues 2–208 lie on the Cytoplasmic side of the membrane; the sequence is ASSAASSEHF…SRKVTTNKLL (207 aa). Positions 35–98 form a coiled coil; the sequence is TAGTEEKKKL…AKLHREVRST (64 aa). At T103 the chain carries Phosphothreonine. The residue at position 107 (R107) is an Omega-N-methylarginine. A Phosphoserine modification is found at S138. Positions 161–198 form a coiled coil; that stretch reads SEIIEELGEQRDQLERTKSRLVNTSENLSKSRKILRSM. The helical; Anchor for type IV membrane protein transmembrane segment at 209–229 threads the bilayer; that stretch reads LSIIILLELAILGGLVYYKFF. Residues 230–232 are Vesicular-facing; the sequence is RSH.

The protein belongs to the VTI1 family. Forms a SNARE complex with STX7, STX8 and VAMP8 which functions in the homotypic fusion of late endosomes. Component of the SNARE complex composed of STX7, STX8, VAMP7 and VIT1B that is required for heterotypic fusion of late endosomes with lysosomes. May interact with STX17. Interacts with CLINT1. Expressed in all tissues examined.

It is found in the early endosome membrane. The protein resides in the late endosome membrane. The protein localises to the lysosome membrane. It localises to the cytoplasmic granule. Its subcellular location is the recycling endosome membrane. Its function is as follows. V-SNARE that mediates vesicle transport pathways through interactions with t-SNAREs on the target membrane. These interactions are proposed to mediate aspects of the specificity of vesicle trafficking and to promote fusion of the lipid bilayers. May be concerned with increased secretion of cytokines associated with cellular senescence. This is Vesicle transport through interaction with t-SNAREs homolog 1B (VTI1B) from Homo sapiens (Human).